A 1807-amino-acid chain; its full sequence is Integrin beta-4 (1807 aa).

The signal sequence occupies residues 1–27 (MAGLCSSPWVKLLLAVVLSAGLPGNMA). The Extracellular portion of the chain corresponds to 28-713 (NRCKKAQVKS…KKKDCLPAPS (686 aa)). In terms of domain architecture, PSI spans 29-73 (RCKKAQVKSCTECIRVDKSCAYCTDELFKERRCNTQADVLAAGCR). Intrachain disulfides connect C30-C48, C38-C456, C41-C61, C51-C72, C245-C288, C458-C477, C469-C480, and C482-C491. One can recognise a VWFA domain in the interval 131-340 (DLYILMDFSN…SYYEKLHKYF (210 aa)). Residues S139 and S141 each coordinate Mg(2+). The Ca(2+) site is built by S141, D144, D145, and D176. The involved in NRG1- and IGF1-binding stretch occupies residues 194 to 199 (WPNSDP). Ca(2+)-binding residues include N228, D230, P232, and E233. Mg(2+) is bound at residue E233. N327 carries N-linked (GlcNAc...) asparagine glycosylation. E350 contributes to the Ca(2+) binding site. I-EGF domains lie at 458–492 (CELQ…KTCN), 493–538 (CSTG…HFCE), 539–575 (YDNF…RSCD), and 576–617 (CPLS…TTCE). N-linked (GlcNAc...) asparagine glycosylation occurs at N492. 11 disulfide bridges follow: C493–C521, C504–C519, C513–C524, C526–C537, C544–C558, C552–C563, C565–C574, C576–C599, C583–C597, C591–C602, and C604–C616. Residue N580 is glycosylated (N-linked (GlcNAc...) asparagine). An N-linked (GlcNAc...) asparagine glycan is attached at N619. 4 disulfides stabilise this stretch: C628–C673, C634–C653, C637–C650, and C682–C708. An N-linked (GlcNAc...) asparagine glycan is attached at N697. Residues 714–734 (WWLIPLLIFLLLLLVLLLLLC) traverse the membrane as a helical segment. The segment at 734 to 751 (CWKYCACCKACLGLLPCC) is palmitoylated on several cysteines. Residues 735 to 1807 (WKYCACCKAC…THMDQQFFQT (1073 aa)) are Cytoplasmic-facing. Phosphoserine occurs at positions 773, 1071, and 1121. One can recognise a Calx-beta domain in the interval 981 to 1086 (VNITIIKEQA…QVRRFQVQLS (106 aa)). The disordered stretch occupies residues 1119–1141 (SASPPLPRGDLGAPQNPNAKAAG). 2 consecutive Fibronectin type-III domains span residues 1131–1220 (APQN…THQE) and 1224–1323 (EPGR…TQPK). Residues S1386, S1389, and S1405 each carry the phosphoserine modification. T1418 carries the post-translational modification Phosphothreonine. Position 1425 is a phosphoserine (S1425). The residue at position 1514 (T1514) is a Phosphothreonine. Fibronectin type-III domains lie at 1514–1609 (TPTR…VHPQ) and 1627–1723 (APGP…SQDG). Position 1776 is a phosphoserine (S1776).

It belongs to the integrin beta chain family. As to quaternary structure, heterodimer of an alpha and a beta subunit. Beta-4 associates with alpha-6. Interacts (via cytoplasmic region) with COL17A1 (via cytoplasmic region). Interacts (via cytoplasmic region) with DST isoform 3 (via N-terminus). Interacts (via cytoplasmic domain) with DST (via N-terminus). Interacts with RAC1. ITGA6:ITGB4 is found in a ternary complex with NRG1 and ERBB3. ITGA6:ITGB4 is found in a ternary complex with IGF1 and IGF1R. ITGA6:ITGB4 interacts with IGF2. Interacts with TMEM268; this interaction prevents ITGB4 degradation. Palmitoylated by DHHC3 at several cysteines of the membrane-proximal region, enhancing stability and cell surface expression. Palmitoylation also promotes secondary association with tertaspanins.

Its subcellular location is the cell membrane. The protein resides in the cell junction. It localises to the hemidesmosome. Integrin alpha-6/beta-4 is a receptor for laminin. It plays a critical structural role in the hemidesmosome of epithelial cells. Is required for the regulation of keratinocyte polarity and motility. ITGA6:ITGB4 binds to NRG1 (via EGF domain) and this binding is essential for NRG1-ERBB signaling. ITGA6:ITGB4 binds to IGF1 and this binding is essential for IGF1 signaling. ITGA6:ITGB4 binds to IGF2 and this binding is essential for IGF2 signaling. This chain is Integrin beta-4 (Itgb4), found in Rattus norvegicus (Rat).